Reading from the N-terminus, the 937-residue chain is Isoleucine--tRNA ligase (937 aa).

The 'HIGH' region signature appears at 58–68; sequence PYANGSIHIGH. Residue Glu561 participates in L-isoleucyl-5'-AMP binding. The 'KMSKS' region motif lies at 602–606; that stretch reads KMSKS. Lys605 contacts ATP. Residues Cys900, Cys903, Cys920, and Cys923 each coordinate Zn(2+).

This sequence belongs to the class-I aminoacyl-tRNA synthetase family. IleS type 1 subfamily. As to quaternary structure, monomer. Requires Zn(2+) as cofactor.

It is found in the cytoplasm. It carries out the reaction tRNA(Ile) + L-isoleucine + ATP = L-isoleucyl-tRNA(Ile) + AMP + diphosphate. Its function is as follows. Catalyzes the attachment of isoleucine to tRNA(Ile). As IleRS can inadvertently accommodate and process structurally similar amino acids such as valine, to avoid such errors it has two additional distinct tRNA(Ile)-dependent editing activities. One activity is designated as 'pretransfer' editing and involves the hydrolysis of activated Val-AMP. The other activity is designated 'posttransfer' editing and involves deacylation of mischarged Val-tRNA(Ile). The chain is Isoleucine--tRNA ligase from Pectobacterium atrosepticum (strain SCRI 1043 / ATCC BAA-672) (Erwinia carotovora subsp. atroseptica).